The sequence spans 121 residues: Large ribosomal subunit protein bL20 (121 aa).

This sequence belongs to the bacterial ribosomal protein bL20 family.

Binds directly to 23S ribosomal RNA and is necessary for the in vitro assembly process of the 50S ribosomal subunit. It is not involved in the protein synthesizing functions of that subunit. This chain is Large ribosomal subunit protein bL20, found in Francisella tularensis subsp. mediasiatica (strain FSC147).